A 321-amino-acid polypeptide reads, in one-letter code: Cytochrome c biogenesis protein CcsA (321 aa).

The next 7 helical transmembrane spans lie at 9–29 (ILTH…LITL), 44–64 (GMIA…VSSG), 68–88 (LSNL…LHTI), 143–163 (MLLS…LLII), 225–245 (VISL…VWAN), 259–273 (TWAF…IYLH), and 288–308 (VASI…LLGI).

Belongs to the CcmF/CycK/Ccl1/NrfE/CcsA family. In terms of assembly, may interact with Ccs1.

It is found in the plastid. Its subcellular location is the chloroplast thylakoid membrane. In terms of biological role, required during biogenesis of c-type cytochromes (cytochrome c6 and cytochrome f) at the step of heme attachment. This chain is Cytochrome c biogenesis protein CcsA, found in Saccharum hybrid (Sugarcane).